We begin with the raw amino-acid sequence, 140 residues long: Coiled-coil domain-containing protein 126 (140 aa).

An N-terminal signal peptide occupies residues 1-35 (MFRTISRKNMSQKLSFLLLVFGLIWGLMLLHYTLQ). N110 carries N-linked (GlcNAc...) asparagine glycosylation. Residues 118–130 (NGTNGNLVPVTTN) show a composition bias toward low complexity. The disordered stretch occupies residues 118 to 140 (NGTNGNLVPVTTNKRTSVSGSVR). Residues 131 to 140 (KRTSVSGSVR) are compositionally biased toward polar residues.

The protein localises to the secreted. The protein is Coiled-coil domain-containing protein 126 (Ccdc126) of Mus musculus (Mouse).